The chain runs to 338 residues: P2Y purinoceptor 14 (338 aa).

The Extracellular portion of the chain corresponds to 1-29 (MNNSTTTDPPNQPCSWNTLITKQIIPVLY). Asn-2 and Asn-3 each carry an N-linked (GlcNAc...) asparagine glycan. Residues 30-50 (GMVFITGLLLNGISGWIFFYV) form a helical membrane-spanning segment. The Cytoplasmic portion of the chain corresponds to 51–55 (PSSKS). Residues 56–76 (FIIYLKNIVVADFLMGLTFPF) traverse the membrane as a helical segment. Residues 77-96 (KVLGDSGLGPWQVNVFVCRV) lie on the Extracellular side of the membrane. The cysteines at positions 94 and 172 are disulfide-linked. The helical transmembrane segment at 97–117 (SAVIFYVNMYVSIVFFGLISF) threads the bilayer. Over 118–139 (DRYYKIVKPLLTSIVQSVNYSK) the chain is Cytoplasmic. The chain crosses the membrane as a helical span at residues 140-160 (LLSVLVWMLMLLLAVPNIILT). The Extracellular portion of the chain corresponds to 161 to 188 (NQGVKEVTKIQCMELKNELGRKWHKASN). The helical transmembrane segment at 189–209 (YIFVSIFWVVFLLLIVFYTAI) threads the bilayer. Topologically, residues 210 to 234 (TRKIFKSHLKSRKNSTSVKRKSSRN) are cytoplasmic. A helical membrane pass occupies residues 235–255 (IFSIVLVFVVCFVPYHIARIP). Topologically, residues 256 to 278 (YTKSQTEGHYSCRTKETLLYAKE) are extracellular. Residues 279–299 (FTLLLSAANVCLDPIIYFFLC) traverse the membrane as a helical segment. At 300-338 (QPFREVLNKKLHMSLKVQNDLEVSKTKRENAIHESTDTL) the chain is on the cytoplasmic side.

Belongs to the G-protein coupled receptor 1 family.

The protein resides in the cell membrane. Receptor for UDP-glucose coupled to G-proteins. The polypeptide is P2Y purinoceptor 14 (P2ry14) (Mus musculus (Mouse)).